Reading from the N-terminus, the 66-residue chain is Conotoxin PnMLCL-01 (66 aa).

Positions methionine 1 to serine 19 are cleaved as a signal peptide. The propeptide occupies asparagine 20–arginine 45. At cysteine 63 the chain carries Cysteine amide.

It belongs to the conotoxin T superfamily. In terms of processing, contains 2 disulfide bonds that can be either 'C1-C3, C2-C4' or 'C1-C4, C2-C3', since these disulfide connectivities have been observed for conotoxins with cysteine framework V (for examples, see AC P0DQQ7 and AC P81755). Expressed by the venom duct.

It localises to the secreted. This chain is Conotoxin PnMLCL-01, found in Conus pennaceus (Feathered cone).